The following is a 309-amino-acid chain: Vomeronasal type-1 receptor 52 (309 aa).

Topologically, residues 1 to 19 (MNKDHTLYCSVYIRNAFFS) are extracellular. A helical transmembrane segment spans residues 20–40 (EIGIGISANSCLLLFHTFMFI). Residues 41–49 (RGHRPRLTD) lie on the Cytoplasmic side of the membrane. Residues 50-70 (LPIGFVALIHLVMLLLAAYIT) form a helical membrane-spanning segment. The Extracellular segment spans residues 71 to 93 (EDFFMSSGGWDDITCKLVIFLHR). A disulfide bond links Cys-85 and Cys-172. Residues 94–114 (FFRSLSVCATCLLSVFQAIIL) traverse the membrane as a helical segment. Over 115-134 (CPQSSHLAKLKQNSPHQLSY) the chain is Cytoplasmic. The chain crosses the membrane as a helical span at residues 135 to 155 (FFIFLSIFYTSISSHILIAAI). Residues 156 to 187 (PTQNITFVNLIYITNSCSFLPLSSSMQHTFST) are Extracellular-facing. N-linked (GlcNAc...) asparagine glycosylation is present at Asn-159. A helical transmembrane segment spans residues 188-208 (LLAFRNVFVIGLMGLSTCYMA). Over 209-238 (TLLCRHKTRSQRLQNSKLSPKATPEQRALR) the chain is Cytoplasmic. The helical transmembrane segment at 239 to 259 (TILMLMSFFLLMSTFDSIISY) threads the bilayer. Topologically, residues 260 to 268 (SRTILQGNP) are extracellular. Residues 269–289 (LPFCFQILVAHSYAAVSPLLV) form a helical membrane-spanning segment. Residues 290–309 (LSNEKRITNLLISMYEKIVL) lie on the Cytoplasmic side of the membrane.

The protein belongs to the G-protein coupled receptor 1 family.

It is found in the cell membrane. In terms of biological role, putative pheromone receptor implicated in the regulation of social and reproductive behavior. This chain is Vomeronasal type-1 receptor 52 (Vmn1r52), found in Mus musculus (Mouse).